The following is a 48-amino-acid chain: Large ribosomal subunit protein bL32 (48 aa).

The interval 28–48 (VKDKDGSWKMPHRINKTTGEY) is disordered.

This sequence belongs to the bacterial ribosomal protein bL32 family.

The sequence is that of Large ribosomal subunit protein bL32 from Campylobacter concisus (strain 13826).